Consider the following 202-residue polypeptide: ATP-dependent Clp protease proteolytic subunit (202 aa).

Residue Ser-98 is the Nucleophile of the active site. His-123 is an active-site residue.

The protein belongs to the peptidase S14 family. In terms of assembly, fourteen ClpP subunits assemble into 2 heptameric rings which stack back to back to give a disk-like structure with a central cavity, resembling the structure of eukaryotic proteasomes.

The protein localises to the cytoplasm. It catalyses the reaction Hydrolysis of proteins to small peptides in the presence of ATP and magnesium. alpha-casein is the usual test substrate. In the absence of ATP, only oligopeptides shorter than five residues are hydrolyzed (such as succinyl-Leu-Tyr-|-NHMec, and Leu-Tyr-Leu-|-Tyr-Trp, in which cleavage of the -Tyr-|-Leu- and -Tyr-|-Trp bonds also occurs).. Its function is as follows. Cleaves peptides in various proteins in a process that requires ATP hydrolysis. Has a chymotrypsin-like activity. Plays a major role in the degradation of misfolded proteins. This is ATP-dependent Clp protease proteolytic subunit from Magnetococcus marinus (strain ATCC BAA-1437 / JCM 17883 / MC-1).